A 520-amino-acid polypeptide reads, in one-letter code: DNA-(apurinic or apyrimidinic site) endonuclease 2 (520 aa).

Glu59 provides a ligand contact to Mg(2+). Residue Tyr181 is part of the active site. The Mg(2+) site is built by Asp222, Asn224, and Asp353. Asp222 serves as the catalytic Proton donor/acceptor. The Zn(2+) site is built by Cys476, His478, Cys500, and Cys514. A GRF-type zinc finger spans residues 476-520 (CRHGEESMLKTSKTSANPGRKFWICKRSRGDSNNTESSCGFFQWV).

It belongs to the DNA repair enzymes AP/ExoA family. The cofactor is Mg(2+). Mn(2+) is required as a cofactor.

The protein localises to the nucleus. It catalyses the reaction Exonucleolytic cleavage in the 3'- to 5'-direction to yield nucleoside 5'-phosphates.. In terms of biological role, DNA repair enzyme that cleaves apurinic/apyrimidinic (AP) sites and removes 3'-blocking groups present at single strand breaks of damaged DNA. This is DNA-(apurinic or apyrimidinic site) endonuclease 2 (APN2) from Saccharomyces cerevisiae (strain ATCC 204508 / S288c) (Baker's yeast).